A 109-amino-acid polypeptide reads, in one-letter code: Cell division protein ZapA (109 aa).

Positions 21 to 99 form a coiled coil; the sequence is PEQLDALNQA…IEQALLEQGR (79 aa).

The protein belongs to the ZapA family. Type 1 subfamily. As to quaternary structure, homodimer. Interacts with FtsZ.

Its subcellular location is the cytoplasm. Activator of cell division through the inhibition of FtsZ GTPase activity, therefore promoting FtsZ assembly into bundles of protofilaments necessary for the formation of the division Z ring. It is recruited early at mid-cell but it is not essential for cell division. The polypeptide is Cell division protein ZapA (Edwardsiella ictaluri (strain 93-146)).